The chain runs to 122 residues: S-adenosylmethionine decarboxylase proenzyme (122 aa).

Serine 61 (schiff-base intermediate with substrate; via pyruvic acid) is an active-site residue. Position 61 is a pyruvic acid (Ser); by autocatalysis (serine 61). Residue histidine 66 is the Proton acceptor; for processing activity of the active site. The Proton donor; for catalytic activity role is filled by cysteine 81.

The protein belongs to the prokaryotic AdoMetDC family. Type 1 subfamily. In terms of assembly, heterotetramer of two alpha and two beta chains arranged as a dimer of alpha/beta heterodimers. It depends on pyruvate as a cofactor. In terms of processing, is synthesized initially as an inactive proenzyme. Formation of the active enzyme involves a self-maturation process in which the active site pyruvoyl group is generated from an internal serine residue via an autocatalytic post-translational modification. Two non-identical subunits are generated from the proenzyme in this reaction, and the pyruvate is formed at the N-terminus of the alpha chain, which is derived from the carboxyl end of the proenzyme. The post-translation cleavage follows an unusual pathway, termed non-hydrolytic serinolysis, in which the side chain hydroxyl group of the serine supplies its oxygen atom to form the C-terminus of the beta chain, while the remainder of the serine residue undergoes an oxidative deamination to produce ammonia and the pyruvoyl group blocking the N-terminus of the alpha chain.

It carries out the reaction S-adenosyl-L-methionine + H(+) = S-adenosyl 3-(methylsulfanyl)propylamine + CO2. The protein operates within amine and polyamine biosynthesis; S-adenosylmethioninamine biosynthesis; S-adenosylmethioninamine from S-adenosyl-L-methionine: step 1/1. In terms of biological role, catalyzes the decarboxylation of S-adenosylmethionine to S-adenosylmethioninamine (dcAdoMet), the propylamine donor required for the synthesis of the polyamines spermine and spermidine from the diamine putrescine. The protein is S-adenosylmethionine decarboxylase proenzyme of Prochlorococcus marinus (strain MIT 9211).